A 757-amino-acid polypeptide reads, in one-letter code: POU domain, class 2, transcription factor 1 (757 aa).

Disordered regions lie at residues M1–G43, A271–E295, S375–K398, and V532–L574. Composition is skewed to polar residues over residues R19–G43 and V275–P285. In terms of domain architecture, POU-specific spans E294–E368. Positions R395–N454 form a DNA-binding region, homeobox.

Belongs to the POU transcription factor family. Class-2 subfamily.

It is found in the cytoplasm. It localises to the nucleus. Transcription factor that binds to the octamer motif (5'-ATTTGCAT-3') and activates the promoters of the genes for some small nuclear RNAs (snRNA) and histone H2B. Acts downstream of Notch signaling during radial glia formation. Regulates apoptosis, possibly via an FGF-signaling pathway. The polypeptide is POU domain, class 2, transcription factor 1 (Xenopus tropicalis (Western clawed frog)).